The chain runs to 703 residues: DnaJ homolog subfamily C member 14 (703 aa).

Disordered stretches follow at residues 1 to 150 and 164 to 229; these read MAQK…DGSS and EDEE…RKRS. The segment covering 17–28 has biased composition (low complexity); the sequence is SGGSSLITSGSS. Residues 75-84 show a composition bias toward pro residues; sequence HGPPRGPGPP. Composition is skewed to acidic residues over residues 89–102 and 164–176; these read YPDE…ESGV and EDEE…DDEE. Residues 193 to 202 are compositionally biased toward basic residues; that stretch reads PPSRRQRHRF. Residues 203–218 show a composition bias toward basic and acidic residues; the sequence is LTKEDVRDSGRRDPKA. The segment covering 219 to 228 has biased composition (basic residues); that stretch reads PGRHRLARKR. 3 helical membrane-spanning segments follow: residues 254-274, 305-325, and 327-347; these read WWLI…GYLI, VMFQ…IRLL, and VVGA…QLGW. In terms of domain architecture, J spans 444 to 508; sequence NPFHVLGVEA…ERRKEYEMKR (65 aa). 2 disordered regions span residues 622–643 and 659–703; these read FGSR…PPAD and MSNG…PFQR. Positions 673–684 are enriched in polar residues; it reads GTTSTSRPNSSV. The segment covering 691–703 has biased composition (basic residues); the sequence is PKRRKKVRRPFQR.

As to quaternary structure, interacts with the FxxxFxxxF motif of DRD1 via its C-terminal domain. As to expression, detected in heart, brain, lung, liver, skeletal muscle, kidney and testis.

It localises to the endoplasmic reticulum membrane. In terms of biological role, regulates the export of target proteins, such as DRD1, from the endoplasmic reticulum to the cell surface. This is DnaJ homolog subfamily C member 14 (Dnajc14) from Rattus norvegicus (Rat).